Here is a 258-residue protein sequence, read N- to C-terminus: Imidazole glycerol phosphate synthase subunit HisF (258 aa).

Residues Asp-12 and Asp-131 contribute to the active site.

The protein belongs to the HisA/HisF family. Heterodimer of HisH and HisF.

It localises to the cytoplasm. It carries out the reaction 5-[(5-phospho-1-deoxy-D-ribulos-1-ylimino)methylamino]-1-(5-phospho-beta-D-ribosyl)imidazole-4-carboxamide + L-glutamine = D-erythro-1-(imidazol-4-yl)glycerol 3-phosphate + 5-amino-1-(5-phospho-beta-D-ribosyl)imidazole-4-carboxamide + L-glutamate + H(+). It functions in the pathway amino-acid biosynthesis; L-histidine biosynthesis; L-histidine from 5-phospho-alpha-D-ribose 1-diphosphate: step 5/9. IGPS catalyzes the conversion of PRFAR and glutamine to IGP, AICAR and glutamate. The HisF subunit catalyzes the cyclization activity that produces IGP and AICAR from PRFAR using the ammonia provided by the HisH subunit. This chain is Imidazole glycerol phosphate synthase subunit HisF, found in Sinorhizobium fredii (strain NBRC 101917 / NGR234).